The primary structure comprises 115 residues: UPF0102 protein Swol_1475 (115 aa).

It belongs to the UPF0102 family.

In Syntrophomonas wolfei subsp. wolfei (strain DSM 2245B / Goettingen), this protein is UPF0102 protein Swol_1475.